The following is a 553-amino-acid chain: Glycerol kinase 2 (553 aa).

Residue Thr20 coordinates substrate. Arg24 contacts ATP. Arg94, Tyr148, and Asp259 together coordinate substrate. Residues Thr281, Gly326, and 427-431 (GMTNN) each bind ATP. A helical membrane pass occupies residues 526–546 (IFSSLPLGFFIVSSMVMLIGA).

This sequence belongs to the FGGY kinase family. As to quaternary structure, interacts with ARMC12. Interacts with PLD6. Testis-specific. Expressed in the midpiece of spermatozoa.

The protein resides in the mitochondrion outer membrane. It localises to the cytoplasm. It catalyses the reaction glycerol + ATP = sn-glycerol 3-phosphate + ADP + H(+). Its pathway is polyol metabolism; glycerol degradation via glycerol kinase pathway; sn-glycerol 3-phosphate from glycerol: step 1/1. Key enzyme in the regulation of glycerol uptake and metabolism. Essential for male fertility and sperm mitochondrial sheath formation. Required for proper arrangement of crescent-like mitochondria to form the mitochondrial sheath during spermatogenesis. Can induce mitochondrial clustering through interactions with PLD6 and up-regulation of phosphatidic acid synthesis in the mitochondria. The sequence is that of Glycerol kinase 2 (GK2) from Homo sapiens (Human).